The sequence spans 687 residues: DnaJ protein ERDJ2A (687 aa).

Residues 1–8 (MAASEENS) are Lumenal-facing. Residues 9–29 (ALFPIFILTIMAIPLVPYTMV) form a helical membrane-spanning segment. Over 30–65 (KLSGALSKKQRTIHCQCLECDRSGKYKRSLFKKISN) the chain is Cytoplasmic. The chain crosses the membrane as a helical span at residues 66–86 (FSTWSNLTLVLLWVVMIFLIY). The Lumenal segment spans residues 87-190 (YTKNMSREAQ…FLLDIDGASG (104 aa)). An N-linked (GlcNAc...) asparagine glycan is attached at N90. A J domain is found at 99–164 (DPFSILGLEP…VSRENFEKYG (66 aa)). Residues 191–211 (GILLLWIVGVCILLPLVIAVI) form a helical membrane-spanning segment. An SEC63 domain is found at 205-603 (PLVIAVIYLS…IGCDKKQALK (399 aa)). Topologically, residues 212-687 (YLSRSSKYTG…SSEESGSEEE (476 aa)) are cytoplasmic. Residues 619-687 (SDEGAIAEEG…SSEESGSEEE (69 aa)) form a disordered region. Positions 623–654 (AIAEEGMEEEDEIEEEDYDDDYESEYSEDEDE) are enriched in acidic residues.

Interacts with OEP61/TPR7. In terms of tissue distribution, expressed in leaves, flower buds and flowers.

The protein resides in the endoplasmic reticulum membrane. Required for integral membrane and secreted preprotein translocation across the endoplasmic reticulum membrane. The chain is DnaJ protein ERDJ2A (ERDJ2A) from Arabidopsis thaliana (Mouse-ear cress).